The primary structure comprises 362 residues: Cytoskeleton protein RodZ (362 aa).

The Cytoplasmic segment spans residues 1-111; sequence MNTEASQDQT…LGKKHKKRDG (111 aa). The HTH cro/C1-type domain maps to 19 to 79; that stretch reads LRQARESLGL…KLVHLPEDEL (61 aa). Residues 30–49 constitute a DNA-binding region (H-T-H motif); it reads QQTVAERLCLKVSTIRDIEE. A helical; Signal-anchor for type II membrane protein transmembrane segment spans residues 112-132; sequence WLMSFTWLIVLVVLGLTGAWW. Residues 133-362 are Periplasmic-facing; it reads WQNHQAQQAE…RVARLTVGVE (230 aa). The tract at residues 151–277 is disordered; sequence SAQLSQNGGQ…LPTADAGVSG (127 aa). Positions 193 to 221 are enriched in low complexity; it reads STSAVTNSATTSSATTSSVPTTSSVPKTT. Positions 223 to 242 are enriched in polar residues; the sequence is VPKTNSTEPVDTANTNTTMH. The span at 246 to 259 shows a compositional bias: low complexity; sequence AASAAVSPSQVPQP.

Belongs to the RodZ family.

The protein localises to the cell inner membrane. Cytoskeletal protein that is involved in cell-shape control through regulation of the length of the long axis. The protein is Cytoskeleton protein RodZ of Yersinia pseudotuberculosis serotype IB (strain PB1/+).